Here is a 511-residue protein sequence, read N- to C-terminus: Cytochrome P450 monooxygenase esdpI (511 aa).

A helical membrane pass occupies residues 14–34 (VRAGLAIGVAILAIIVLFPGI). Cysteine 453 contributes to the heme binding site.

It belongs to the cytochrome P450 family. The cofactor is heme.

The protein localises to the membrane. It functions in the pathway secondary metabolite biosynthesis; terpenoid biosynthesis. Functionally, cytochrome P450 monooxygenase; part of the cluster that mediates the biosynthesis of shearones, diterpenoid pyrones (DPs) which are structurally diverse meroterpenoids consisting of a diterpene linked by a pyrone, and which may exhibit a range of bioactivities. Whitin the pathway, esdpI takes part in the molecular scaffold modification via the hydroxylation at C-20 and can transform shearone C into shearone G. The molecular scaffold is commonly biosynthesized by a series of enzymes including the non-reducing polyketide synthase (NR-PKS) esdpA that generates an alpha-pyrone; the prenyltransferase esdpC that attaches a geranylgeranyl pyrophosphate (GGPP) produced by the GGPP synthase (GGPPS) esdpD onto the pyrone unit; the FAD-dependent monooxygenase esdpE that converts an olefin on the diterpene unit into an epoxide; and the terpene cyclase esdpB that catalyzes the cyclization reactions to give the molecular backbone shearone A. In the modification steps, esdpF oxidizes the hydroxy group to a ketone at C-3 and esdpG then attaches hydroxy groups at both C-11 and C-12. After that, esdpI hydroxylates at C-20 and esdpH hydroxylates at C-6'. The ether bridge is generated by nucleophilic attack of the hydroxy group at C-20 to the carbonyl carbon at C-3. EsdpH can also functions prior to esdpI. The different combinations of these modification enzymes lead to the production of diverse shearone derivatives, shearone I being the end product of the pathway. The alpha-ketoglutarate-dependent dioxygenase esdpJ seems not to be involved in this pathway. The sequence is that of Cytochrome P450 monooxygenase esdpI from Penicillium shearii (Eupenicillium shearii).